A 355-amino-acid polypeptide reads, in one-letter code: MIPRKRYGSKNTDQGVYLGLSKTQVLSPATAGSSSSDIAPLPPPVALVPPPPDTMSCRDRTQEFLSACKSLQSRQNGIQANKPALRAVRQRSEFTLMAKRIGKDLSNTFAKLEKLTILAKRKSLFDDKAVEIEELTYIIKQDINSLNKQIAQLQDFVRAKGSQSGRHLQTHSNTIVVSLQSKLASMSNDFKSVLEVRTENLKQQRSRREQFSRAPVSALPLAPNHLGGGAVVLGAESRASGDVAIDMMDSRTSQQLQLIDEQDSYIQSRADTMQNIESTIVELGSIFQQLAHMVKEQEETIQRIDENVLGAQLDVEAAHSEILKYFQSVTSNRWLMVKIFLILIVFFIIFVVFLA.

Over 1–333 the chain is Cytoplasmic; that stretch reads MIPRKRYGSK…KYFQSVTSNR (333 aa). Residues 28–37 show a composition bias toward polar residues; that stretch reads PATAGSSSSD. Positions 28–47 are disordered; it reads PATAGSSSSDIAPLPPPVAL. Residues 245–247 carry the IxM motif; signal for cargo packaging into COPII-coated vesicles motif; the sequence is IDM. One can recognise a t-SNARE coiled-coil homology domain in the interval 263-325; that stretch reads DSYIQSRADT…EAAHSEILKY (63 aa). A coiled-coil region spans residues 287-318; the sequence is FQQLAHMVKEQEETIQRIDENVLGAQLDVEAA. A helical; Anchor for type IV membrane protein transmembrane segment spans residues 334–354; that stretch reads WLMVKIFLILIVFFIIFVVFL. A topological domain (vesicular) is located at residue A355.

It belongs to the syntaxin family. As to quaternary structure, part of a ternary complex containing STX5A, NSFL1C and VCP. Part of a unique SNARE complex composed of the Golgi SNAREs GOSR1, GOSR2 and YKT6. This complex also includes VTI1A. Component of a SNARE complex consisting of STX5, YKT6, GOSR1 and BET1L. Interacts with BET1L. Interacts with BET1. Interacts with COG4. Interacts with GM130/GOLGA2. Interacts (via IxM motif) with SEC24C and SEC24D; mediates STX5 packaging into COPII-coated vesicles. Interacts with VLDLR; this interaction mediates VLDLR translocation from the endoplasmic reticulum to the plasma membrane.

Its subcellular location is the endoplasmic reticulum-Golgi intermediate compartment membrane. The protein resides in the golgi apparatus membrane. Its function is as follows. Mediates endoplasmic reticulum to Golgi transport. Together with p115/USO1 and GM130/GOLGA2, involved in vesicle tethering and fusion at the cis-Golgi membrane to maintain the stacked and inter-connected structure of the Golgi apparatus. This is Syntaxin-5 (STX5) from Bos taurus (Bovine).